We begin with the raw amino-acid sequence, 576 residues long: Glucoamylase ARB_02327-1 (576 aa).

An N-terminal signal peptide occupies residues 1–20 (MGLASTVSLALLGLCSLARA). Tryptophan 141 contacts substrate. Residues asparagine 168 and asparagine 192 are each glycosylated (N-linked (GlcNAc...) asparagine). The Proton acceptor role is filled by aspartate 197. The active-site Proton donor is glutamate 200. 2 disulfide bridges follow: cysteine 243–cysteine 470 and cysteine 285–cysteine 293. The CBM20 domain occupies 477 to 576 (GSGGDTVAVT…GSFTQNDTWR (100 aa)). Positions 552-576 (TWESDPNRSITTSASGSFTQNDTWR) are disordered. Asparagine 558 and asparagine 572 each carry an N-linked (GlcNAc...) asparagine glycan.

This sequence belongs to the glycosyl hydrolase 15 family.

It is found in the secreted. It carries out the reaction Hydrolysis of terminal (1-&gt;4)-linked alpha-D-glucose residues successively from non-reducing ends of the chains with release of beta-D-glucose.. The sequence is that of Glucoamylase ARB_02327-1 from Schizophyllum commune (strain H4-8 / FGSC 9210) (Split gill fungus).